Here is a 279-residue protein sequence, read N- to C-terminus: uncharacterized protein (279 aa).

The signal sequence occupies residues 1 to 31 (MLVQSRTLVTAILSCSLVFGTTVNGASVAIA).

This is an uncharacterized protein from Corynebacterium glutamicum (strain ATCC 13032 / DSM 20300 / JCM 1318 / BCRC 11384 / CCUG 27702 / LMG 3730 / NBRC 12168 / NCIMB 10025 / NRRL B-2784 / 534).